A 251-amino-acid chain; its full sequence is Ubiquinone/menaquinone biosynthesis C-methyltransferase UbiE (251 aa).

Residues Thr74, Asp95, and Asn123–Ala124 contribute to the S-adenosyl-L-methionine site.

The protein belongs to the class I-like SAM-binding methyltransferase superfamily. MenG/UbiE family.

It carries out the reaction a 2-demethylmenaquinol + S-adenosyl-L-methionine = a menaquinol + S-adenosyl-L-homocysteine + H(+). The enzyme catalyses a 2-methoxy-6-(all-trans-polyprenyl)benzene-1,4-diol + S-adenosyl-L-methionine = a 5-methoxy-2-methyl-3-(all-trans-polyprenyl)benzene-1,4-diol + S-adenosyl-L-homocysteine + H(+). It participates in quinol/quinone metabolism; menaquinone biosynthesis; menaquinol from 1,4-dihydroxy-2-naphthoate: step 2/2. Its pathway is cofactor biosynthesis; ubiquinone biosynthesis. Its function is as follows. Methyltransferase required for the conversion of demethylmenaquinol (DMKH2) to menaquinol (MKH2) and the conversion of 2-polyprenyl-6-methoxy-1,4-benzoquinol (DDMQH2) to 2-polyprenyl-3-methyl-6-methoxy-1,4-benzoquinol (DMQH2). This chain is Ubiquinone/menaquinone biosynthesis C-methyltransferase UbiE, found in Shewanella frigidimarina (strain NCIMB 400).